A 331-amino-acid polypeptide reads, in one-letter code: Fructose-1,6-bisphosphatase class 1 (331 aa).

Mg(2+)-binding residues include Glu-80, Asp-98, Leu-100, and Asp-101. Substrate is bound by residues 101–104 and Asn-189; that span reads DGSS. Glu-261 lines the Mg(2+) pocket.

It belongs to the FBPase class 1 family. Homotetramer. Requires Mg(2+) as cofactor.

It localises to the cytoplasm. It catalyses the reaction beta-D-fructose 1,6-bisphosphate + H2O = beta-D-fructose 6-phosphate + phosphate. It functions in the pathway carbohydrate biosynthesis; gluconeogenesis. The protein is Fructose-1,6-bisphosphatase class 1 of Rhodobacter capsulatus (strain ATCC BAA-309 / NBRC 16581 / SB1003).